The following is a 559-amino-acid chain: Thermosome subunit alpha (559 aa).

The segment covering 536–552 has biased composition (basic and acidic residues); sequence SGEKKGEKKEGGEEEKS. Positions 536 to 559 are disordered; that stretch reads SGEKKGEKKEGGEEEKSSTPSSLE.

This sequence belongs to the TCP-1 chaperonin family. Forms a Heterooligomeric complex of two stacked nine-membered rings; one of alpha and the other of beta subunits.

Molecular chaperone; binds unfolded polypeptides in vitro, and has a weak ATPase activity. The protein is Thermosome subunit alpha (thsA) of Sulfurisphaera tokodaii (strain DSM 16993 / JCM 10545 / NBRC 100140 / 7) (Sulfolobus tokodaii).